The following is a 156-amino-acid chain: Ribosome-binding factor A (156 aa).

The segment at A129–R156 is disordered.

It belongs to the RbfA family. As to quaternary structure, monomer. Binds 30S ribosomal subunits, but not 50S ribosomal subunits or 70S ribosomes.

It localises to the cytoplasm. Functionally, one of several proteins that assist in the late maturation steps of the functional core of the 30S ribosomal subunit. Associates with free 30S ribosomal subunits (but not with 30S subunits that are part of 70S ribosomes or polysomes). Required for efficient processing of 16S rRNA. May interact with the 5'-terminal helix region of 16S rRNA. The chain is Ribosome-binding factor A from Salinispora arenicola (strain CNS-205).